The sequence spans 388 residues: uncharacterized protein (388 aa).

The next 11 helical transmembrane spans lie at 18–38 (AAMFLNYLTIGIPLVMLPLYV), 42–62 (LHLSDLLIGIAVGSQFIATLL), 89–111 (ASGLLMLVSLIAHPVPLLAWAIL), 116–136 (VLLGIGESFILTGNLTWGMWL), 145–165 (VISWNGMATYGALAIGAPLGL), 171–191 (AGLALPALLVVLLPIIASGVI), 219–239 (TGLVLQGIGFATLSAFTALWF), 248–268 (GFAMTLFGIAFIAVRFFCAKF), 287–307 (TGLAVMWAAPSAGAALIGAAI), 341–361 (AFQDLAYGFTGPIAGLLTPFI), and 365–385 (QVFLLAAACALLGAAVVHLLL).

This sequence belongs to the major facilitator superfamily. YfcJ family.

Its subcellular location is the cell inner membrane. This is an uncharacterized protein from Salmonella typhimurium (strain LT2 / SGSC1412 / ATCC 700720).